The following is an 82-amino-acid chain: Omega-conotoxin-like TxO6 (82 aa).

The first 22 residues, M1–A22, serve as a signal peptide directing secretion. Residues D23–K50 constitute a propeptide that is removed on maturation. 3 disulfide bridges follow: C53/C71, C60/C76, and C70/C81.

The protein belongs to the conotoxin O1 superfamily. As to expression, expressed by the venom duct.

It localises to the secreted. Its function is as follows. Omega-conotoxins act at presynaptic membranes, they bind and block voltage-gated calcium channels (Cav). In Conus textile (Cloth-of-gold cone), this protein is Omega-conotoxin-like TxO6.